Here is a 1154-residue protein sequence, read N- to C-terminus: Polyketide biosynthesis protein ThaF (1154 aa).

The tract at residues Met330–Val714 is acyl transferase. The segment at Ser627–Ala689 is disordered. The span at Ala641–Pro672 shows a compositional bias: low complexity. The segment covering Ala673–Ala689 has biased composition (pro residues).

In the N-terminal section; belongs to the FabD family.

It localises to the cytoplasm. The enzyme catalyses holo-[ACP] + malonyl-CoA = malonyl-[ACP] + CoA. The protein operates within antibiotic biosynthesis. Functionally, involved in production of the polyketide antibiotic thailandamide. Probably has an acyl transferase activity and could also have a flavin mononucleotide-dependent oxidoreductase activity. The chain is Polyketide biosynthesis protein ThaF from Burkholderia thailandensis (strain ATCC 700388 / DSM 13276 / CCUG 48851 / CIP 106301 / E264).